Reading from the N-terminus, the 184-residue chain is ATP synthase subunit b, chloroplastic (184 aa).

The chain crosses the membrane as a helical span at residues 27-49 (LATNLINLSVVLGVLIFFGKGVL).

It belongs to the ATPase B chain family. In terms of assembly, F-type ATPases have 2 components, F(1) - the catalytic core - and F(0) - the membrane proton channel. F(1) has five subunits: alpha(3), beta(3), gamma(1), delta(1), epsilon(1). F(0) has four main subunits: a(1), b(1), b'(1) and c(10-14). The alpha and beta chains form an alternating ring which encloses part of the gamma chain. F(1) is attached to F(0) by a central stalk formed by the gamma and epsilon chains, while a peripheral stalk is formed by the delta, b and b' chains.

The protein resides in the plastid. It is found in the chloroplast thylakoid membrane. Its function is as follows. F(1)F(0) ATP synthase produces ATP from ADP in the presence of a proton or sodium gradient. F-type ATPases consist of two structural domains, F(1) containing the extramembraneous catalytic core and F(0) containing the membrane proton channel, linked together by a central stalk and a peripheral stalk. During catalysis, ATP synthesis in the catalytic domain of F(1) is coupled via a rotary mechanism of the central stalk subunits to proton translocation. Functionally, component of the F(0) channel, it forms part of the peripheral stalk, linking F(1) to F(0). This Nicotiana tabacum (Common tobacco) protein is ATP synthase subunit b, chloroplastic.